A 30-amino-acid polypeptide reads, in one-letter code: Elongation factor 1-delta (30 aa).

Belongs to the EF-1-beta/EF-1-delta family. As to quaternary structure, EF-1 is composed of 4 subunits: alpha, beta (1B-alpha=beta'), delta (1B-beta), and gamma (1B-gamma).

Functionally, EF-1-beta and EF-1-delta stimulate the exchange of GDP bound to EF-1-alpha to GTP. The chain is Elongation factor 1-delta from Populus euphratica (Euphrates poplar).